A 184-amino-acid polypeptide reads, in one-letter code: Protein GrpE (184 aa).

The interval 1 to 32 (MEEQKQTPSTPTPDTAAEAAVNAATAAPETAG) is disordered. Over residues 12 to 32 (TPDTAAEAAVNAATAAPETAG) the composition is skewed to low complexity.

This sequence belongs to the GrpE family. In terms of assembly, homodimer.

It is found in the cytoplasm. Functionally, participates actively in the response to hyperosmotic and heat shock by preventing the aggregation of stress-denatured proteins, in association with DnaK and GrpE. It is the nucleotide exchange factor for DnaK and may function as a thermosensor. Unfolded proteins bind initially to DnaJ; upon interaction with the DnaJ-bound protein, DnaK hydrolyzes its bound ATP, resulting in the formation of a stable complex. GrpE releases ADP from DnaK; ATP binding to DnaK triggers the release of the substrate protein, thus completing the reaction cycle. Several rounds of ATP-dependent interactions between DnaJ, DnaK and GrpE are required for fully efficient folding. The chain is Protein GrpE from Cupriavidus pinatubonensis (strain JMP 134 / LMG 1197) (Cupriavidus necator (strain JMP 134)).